Consider the following 232-residue polypeptide: Sugar fermentation stimulation protein homolog (232 aa).

It belongs to the SfsA family.

This chain is Sugar fermentation stimulation protein homolog, found in Alkaliphilus metalliredigens (strain QYMF).